Here is a 433-residue protein sequence, read N- to C-terminus: MRGPEPGPQPTMEGDVLDTLEALGYKGPLLEEQALTKAAEGGLSSPEFSELCIWLGSQIKSLCNLEESITSAGRDDLESFQLEISGFLKEMACPYSVLISGDIKDRLKKKEDCLKLLLFLSTELQASQILQNKKHKNSQLDKNSEVYQEVQAMFDTLGIPKSTTSDIPHMLNQVESKVKDILSKVQKNHVGKPLLKMDLNSEQAEQLERINDALSCEYECRRRMLMKRLDVTVQSFGWSDRAKVKTDDIARIYQPKRYALSPKTTITMAHLLAAREDLSKIIRTSSGTSREKTACAINKVLMGRVPDRGGRPNEIEPPPPEMPPWQKRQEGGGGRGGWGGGGGGGGRGGGGGGGGRGGWGGGGGGWGGGGGGGGGWGGGGGGGRGGFQGRGDYGGRGGYGGRGGYGGRGYGDPYGGGGGGGGGGGGGGGYRRY.

The interval 303–433 (GRVPDRGGRP…GGGGGGYRRY (131 aa)) is disordered. Residues 305–314 (VPDRGGRPNE) show a composition bias toward basic and acidic residues. Over residues 331–433 (GGGGRGGWGG…GGGGGGYRRY (103 aa)) the composition is skewed to gly residues.

The protein belongs to the FAM98 family. As to quaternary structure, homodimer. Component of the tRNA-splicing ligase complex. Interacts with FAM98A. In terms of tissue distribution, expressed strongly in colorectal cancer tissues compared to wild-type colon samples (at protein level). Expressed strongly in colorectal cancer tissues compared to wild-type colon samples.

The protein localises to the nucleus. It is found in the cytoplasm. Positively stimulates PRMT1-induced protein arginine dimethylated arginine methylation. This Homo sapiens (Human) protein is Protein FAM98B (FAM98B).